We begin with the raw amino-acid sequence, 159 residues long: Large ribosomal subunit protein uL15 (159 aa).

Basic and acidic residues predominate over residues 1 to 13; that stretch reads MRLNELRDNDGAT. A disordered region spans residues 1–41; the sequence is MRLNELRDNDGATKIRTRVGRGIGSGKGKTGGRGVKGQKSR. Positions 21-35 are enriched in gly residues; sequence RGIGSGKGKTGGRGV.

Belongs to the universal ribosomal protein uL15 family. As to quaternary structure, part of the 50S ribosomal subunit.

Its function is as follows. Binds to the 23S rRNA. This chain is Large ribosomal subunit protein uL15, found in Maricaulis maris (strain MCS10) (Caulobacter maris).